A 616-amino-acid chain; its full sequence is Sodium- and chloride-dependent transporter XTRP3 (616 aa).

A compositionally biased stretch (basic residues) spans 1–11; sequence MRLAIKRRASR. Residues 1-26 form a disordered region; sequence MRLAIKRRASRGQRPGPDEKRARDME. Residues 1–37 lie on the Cytoplasmic side of the membrane; the sequence is MRLAIKRRASRGQRPGPDEKRARDMEKARPQWGNPLQ. The segment covering 16 to 26 has biased composition (basic and acidic residues); it reads GPDEKRARDME. The helical transmembrane segment at 38 to 58 threads the bilayer; the sequence is FVFACISYAVGLGNVWRFPYL. Topologically, residues 59–66 are extracellular; that stretch reads CQMYGGGS. The helical transmembrane segment at 67–87 threads the bilayer; that stretch reads FLVPYLIMLIVEGMPLLYLEL. Residues 88–103 lie on the Cytoplasmic side of the membrane; that stretch reads AVGQRMRQGSIGAWRT. A helical transmembrane segment spans residues 104–124; the sequence is ISPYLSGVGVASVVVSFFLSM. Residues 125 to 189 are Extracellular-facing; it reads YYNVINAWGF…ISPSIQENGG (65 aa). Residue N155 is glycosylated (N-linked (GlcNAc...) asparagine). Residues 190–210 traverse the membrane as a helical segment; the sequence is VQWEPALCLTLAWLMVYLCIL. At 211–218 the chain is on the cytoplasmic side; that stretch reads RGTESTGK. The chain crosses the membrane as a helical span at residues 219 to 239; the sequence is VVYFTALMPYCVLIIYLVRGL. Topologically, residues 240-265 are extracellular; that stretch reads TLHGATNGLMYMFTPKIEQLANPKAW. A helical membrane pass occupies residues 266–286; it reads INAATQIFFSLGLGFGSLIAF. The Cytoplasmic portion of the chain corresponds to 287–300; that stretch reads ASYNEPSNDCQKHA. The chain crosses the membrane as a helical span at residues 301–321; the sequence is VIVSVINSSTSIFASIVTFSI. The Extracellular segment spans residues 322–413; that stretch reads YGFKATFNYE…EAIKNMEVSQ (92 aa). N381 carries an N-linked (GlcNAc...) asparagine glycan. A helical transmembrane segment spans residues 414–434; the sequence is LWSVLYFFMLLMLGMGSMLGN. The Cytoplasmic portion of the chain corresponds to 435-455; the sequence is TAAILTPLTDSKVISSYLPKE. Residues 456–476 form a helical membrane-spanning segment; the sequence is AISGLVCLINCAVGMVFTMEA. Topologically, residues 477–489 are extracellular; the sequence is GNYWFDIFNDYAA. Residues 490–510 form a helical membrane-spanning segment; the sequence is TLSLLLIVLVETIAVCYVYGL. The Cytoplasmic segment spans residues 511–533; it reads RRFESDLRAMTGRPLNWYWKAMW. Residues 534–554 traverse the membrane as a helical segment; sequence AFVSPLLIIGLFIFYLSDYIL. The Extracellular portion of the chain corresponds to 555–578; that stretch reads TGTLQYQAWDATQGQLVTKDYPPH. The helical transmembrane segment at 579–599 threads the bilayer; that stretch reads ALAVIGLLVASSTMCIPLVAL. The Cytoplasmic segment spans residues 600–616; that stretch reads GTFIRNRLKRGGSSPVA.

Belongs to the sodium:neurotransmitter symporter (SNF) (TC 2.A.22) family. SLC6A20 subfamily. Highly expressed in epithelial cells of duodenum, jejunum, ileum, stomach, cecum, colon and kidney proximal tubule. Also expressed in the choroid plexus, microglia and meniges of the brain and in the ovary.

The protein localises to the apical cell membrane. The enzyme catalyses L-proline(out) + chloride(out) + 2 Na(+)(out) = L-proline(in) + chloride(in) + 2 Na(+)(in). It catalyses the reaction 4-hydroxy-L-proline(out) + chloride(out) + 2 Na(+)(out) = 4-hydroxy-L-proline(in) + chloride(in) + 2 Na(+)(in). It carries out the reaction 2-methyl-2-(methylamino)propanoate(out) + chloride(out) + 2 Na(+)(out) = 2-methyl-2-(methylamino)propanoate(in) + chloride(in) + 2 Na(+)(in). The catalysed reaction is L-pipecolate(out) + chloride(out) + 2 Na(+)(out) = L-pipecolate(in) + chloride(in) + 2 Na(+)(in). The enzyme catalyses glycine betaine(out) + chloride(out) + 2 Na(+)(out) = glycine betaine(in) + chloride(in) + 2 Na(+)(in). It catalyses the reaction glycine(out) + chloride(out) + 2 Na(+)(out) = glycine(in) + chloride(in) + 2 Na(+)(in). Mediates the Na(+)- and Cl(-)-dependent uptake of imino acids such as L-proline, N-methyl-L-proline and pipecolate as well as N-methylated amino acids. Also transports glycine, regulates proline and glycine homeostasis in the brain playing a role in the modulation of NMDAR currents. In Rattus norvegicus (Rat), this protein is Sodium- and chloride-dependent transporter XTRP3.